Here is a 422-residue protein sequence, read N- to C-terminus: 3-phosphoshikimate 1-carboxyvinyltransferase (422 aa).

The 3-phosphoshikimate site is built by lysine 24, serine 25, and arginine 29. Lysine 24 contacts phosphoenolpyruvate. 2 residues coordinate phosphoenolpyruvate: glycine 93 and arginine 121. 3-phosphoshikimate contacts are provided by serine 164, serine 165, glutamine 166, glutamate 308, and histidine 335. Glutamine 166 contacts phosphoenolpyruvate. Catalysis depends on glutamate 308, which acts as the Proton acceptor. Residues arginine 339, arginine 380, and lysine 405 each contribute to the phosphoenolpyruvate site.

This sequence belongs to the EPSP synthase family. Monomer.

The protein localises to the cytoplasm. It catalyses the reaction 3-phosphoshikimate + phosphoenolpyruvate = 5-O-(1-carboxyvinyl)-3-phosphoshikimate + phosphate. The protein operates within metabolic intermediate biosynthesis; chorismate biosynthesis; chorismate from D-erythrose 4-phosphate and phosphoenolpyruvate: step 6/7. Functionally, catalyzes the transfer of the enolpyruvyl moiety of phosphoenolpyruvate (PEP) to the 5-hydroxyl of shikimate-3-phosphate (S3P) to produce enolpyruvyl shikimate-3-phosphate and inorganic phosphate. The chain is 3-phosphoshikimate 1-carboxyvinyltransferase from Saccharopolyspora erythraea (strain ATCC 11635 / DSM 40517 / JCM 4748 / NBRC 13426 / NCIMB 8594 / NRRL 2338).